A 367-amino-acid chain; its full sequence is FAD synthetase 2, chloroplastic (367 aa).

The transit peptide at 1–57 directs the protein to the chloroplast; sequence MLCGGSRVLQHLSDHNHHNSIGLGLGFCGAKIVQLSSFFLRPSQAMAKSHHFSRKLR.

Requires Mg(2+) as cofactor.

It is found in the plastid. The protein localises to the chloroplast. It catalyses the reaction FMN + ATP + H(+) = FAD + diphosphate. It functions in the pathway cofactor biosynthesis; FAD biosynthesis; FAD from FMN: step 1/1. Catalyzes the adenylation of flavin mononucleotide (FMN) to form flavin adenine dinucleotide (FAD) coenzyme. In Arabidopsis thaliana (Mouse-ear cress), this protein is FAD synthetase 2, chloroplastic.